The sequence spans 418 residues: CinA-like protein (418 aa).

Belongs to the CinA family.

This Flavobacterium psychrophilum (strain ATCC 49511 / DSM 21280 / CIP 103535 / JIP02/86) protein is CinA-like protein.